The sequence spans 842 residues: Valine--tRNA ligase (842 aa).

Residues 86 to 96 (PFTSGELHMGH) carry the 'HIGH' region motif. Positions 572–576 (RMSKS) match the 'KMSKS' region motif. Lysine 575 is a binding site for ATP.

The protein belongs to the class-I aminoacyl-tRNA synthetase family. ValS type 2 subfamily.

It localises to the cytoplasm. The enzyme catalyses tRNA(Val) + L-valine + ATP = L-valyl-tRNA(Val) + AMP + diphosphate. Its function is as follows. Catalyzes the attachment of valine to tRNA(Val). As ValRS can inadvertently accommodate and process structurally similar amino acids such as threonine, to avoid such errors, it has a 'posttransfer' editing activity that hydrolyzes mischarged Thr-tRNA(Val) in a tRNA-dependent manner. The chain is Valine--tRNA ligase from Saccharolobus solfataricus (strain ATCC 35092 / DSM 1617 / JCM 11322 / P2) (Sulfolobus solfataricus).